The following is a 318-amino-acid chain: 2-oxoacid:ferredoxin oxidoreductase 1, subunit beta (318 aa).

[4Fe-4S] cluster is bound by residues Cys18, Cys21, and Cys52. Residues 50-53 (IGCS) and His69 contribute to the thiamine diphosphate site. Asp94 contacts Mg(2+). 95–96 (GD) is a binding site for thiamine diphosphate. Residues Asn122 and Val124 each coordinate Mg(2+). 126–127 (GL) contributes to the thiamine diphosphate binding site. Cys201 is a [4Fe-4S] cluster binding site.

Heterodimer composed of an alpha and a beta subunit. The cofactor is [4Fe-4S] cluster. Thiamine diphosphate is required as a cofactor. It depends on Mg(2+) as a cofactor.

The catalysed reaction is a 2-oxocarboxylate + 2 oxidized [2Fe-2S]-[ferredoxin] + CoA = an acyl-CoA + 2 reduced [2Fe-2S]-[ferredoxin] + CO2 + H(+). Functionally, catalyzes the coenzyme A-dependent oxidative decarboxylation of different 2-oxoacids such as pyruvate, 2-oxobutyrate and glyoxylate to form their CoA derivatives. The sequence is that of 2-oxoacid:ferredoxin oxidoreductase 1, subunit beta from Aeropyrum pernix (strain ATCC 700893 / DSM 11879 / JCM 9820 / NBRC 100138 / K1).